The following is a 257-amino-acid chain: Snake venom serine protease KN2 (257 aa).

The N-terminal stretch at 1–18 is a signal peptide; it reads MVLIRVLANLLILQLSYA. Residues 19 to 24 constitute a propeptide that is removed on maturation; the sequence is QKSSEL. One can recognise a Peptidase S1 domain in the interval 25–248; sequence VIGGHPCNIN…HLDWIKSIIA (224 aa). 6 disulfide bridges follow: Cys-31–Cys-162, Cys-49–Cys-65, Cys-97–Cys-255, Cys-141–Cys-209, Cys-173–Cys-188, and Cys-199–Cys-224. Active-site charge relay system residues include His-64 and Asp-109. Asn-120 and Asn-121 each carry an N-linked (GlcNAc...) asparagine glycan. Ser-203 acts as the Charge relay system in catalysis.

Belongs to the peptidase S1 family. Snake venom subfamily. In terms of assembly, monomer. Expressed by the venom gland.

The protein resides in the secreted. Its function is as follows. Snake venom serine protease that may act in the hemostasis system of the prey. This chain is Snake venom serine protease KN2, found in Trimeresurus stejnegeri (Chinese green tree viper).